A 461-amino-acid polypeptide reads, in one-letter code: uncharacterized protein (461 aa).

Positions methionine 1 to tyrosine 19 are enriched in basic and acidic residues. The segment at methionine 1 to isoleucine 21 is disordered.

It belongs to the CapA family.

Its function is as follows. Could be involved in the biosynthesis of a cell wall component. This is an uncharacterized protein from Sinorhizobium fredii (strain NBRC 101917 / NGR234).